Reading from the N-terminus, the 345-residue chain is MLPCFQLLRIGGGRGGDLYTFHPPAGAGCTYRLGHRADLCDVALRPQQEPGLISGIHAELHAEPRGDDWRVSLEDHSSQGTLVNNVRLPRGHRLELSDGDLLTFGPEGPPGTSPSEFYFMFQQVRVKPQDFAAITIPRSRGEARVGAGFRPMLPSQGAPQRPLSTLSPAPKATLILNSIGSLSKLRPQPLTFSPSWGGPKSLPVPAPPGEVGTTPSAPPQRNRRKSVHRVLAELDDESEPPENPPPVLMERRKKLRVDKAPLTPTGNRRGRPRKYPVSAPVAPPAVGGGEPCAAPCCCLPQEETVAWVQCDGCDVWFHVACVGCSIQAAREADFRCPGCRAGIQT.

The FHA domain maps to 31 to 88 (YRLGHRADLCDVALRPQQEPGLISGIHAELHAEPRGDDWRVSLEDHSSQGTLVNNVRL). Residue serine 78 is modified to Phosphoserine. Disordered regions lie at residues 147-167 (AGFR…STLS) and 190-227 (LTFS…RKSV). Residues 293 to 342 (AAPCCCLPQEETVAWVQCDGCDVWFHVACVGCSIQAAREADFRCPGCRAG) form a PHD-type zinc finger. Zn(2+)-binding residues include cysteine 296, cysteine 298, cysteine 310, cysteine 313, histidine 318, cysteine 321, cysteine 336, and cysteine 339.

The protein resides in the nucleus. In terms of biological role, potential transcription factor that may play a role in the regulation of genes involved in cell cycle G1/S transition. May bind to regulatory elements of genes, including the promoter of the transcription factor FOXO1. This chain is Transcription factor 19 (TCF19), found in Pan troglodytes (Chimpanzee).